We begin with the raw amino-acid sequence, 208 residues long: ATP-dependent Clp protease proteolytic subunit 1 (208 aa).

The active-site Nucleophile is the S108. Residue H133 is part of the active site.

The protein belongs to the peptidase S14 family. As to quaternary structure, fourteen ClpP subunits assemble into 2 heptameric rings which stack back to back to give a disk-like structure with a central cavity, resembling the structure of eukaryotic proteasomes.

It is found in the cytoplasm. The catalysed reaction is Hydrolysis of proteins to small peptides in the presence of ATP and magnesium. alpha-casein is the usual test substrate. In the absence of ATP, only oligopeptides shorter than five residues are hydrolyzed (such as succinyl-Leu-Tyr-|-NHMec, and Leu-Tyr-Leu-|-Tyr-Trp, in which cleavage of the -Tyr-|-Leu- and -Tyr-|-Trp bonds also occurs).. Cleaves peptides in various proteins in a process that requires ATP hydrolysis. Has a chymotrypsin-like activity. Plays a major role in the degradation of misfolded proteins. This chain is ATP-dependent Clp protease proteolytic subunit 1, found in Corynebacterium glutamicum (strain ATCC 13032 / DSM 20300 / JCM 1318 / BCRC 11384 / CCUG 27702 / LMG 3730 / NBRC 12168 / NCIMB 10025 / NRRL B-2784 / 534).